The sequence spans 300 residues: SNAP25 homologous protein SNAP33 (300 aa).

2 disordered regions span residues 1–76 (MFGL…QSLF) and 176–228 (WKPK…PESA). Serine 29 is subject to Phosphoserine. Residues 38-49 (TLNPSKRTTSEP) show a composition bias toward polar residues. The segment covering 190-208 (TRDDSPTRRVNHLEKREKL) has biased composition (basic and acidic residues). A t-SNARE coiled-coil homology domain is found at 235–297 (EMEKAKQDDG…QQSNQRGRRL (63 aa)).

It belongs to the SNAP-25 family. As to quaternary structure, interacts with the cytokinesis-specific syntaxin KNOLLE and with SYP121. Binds to EXO70B2. In terms of tissue distribution, ubiquitous, with a strong expression in root tips, ovules, very young leaves, vascular tissue, hydathodes, stipules and the abscission and dehiscence zones of the siliques.

The protein localises to the membrane. In terms of biological role, t-SNARE involved in diverse vesicle trafficking and membrane fusion processes, including cell plate formation. May function in the secretory pathway. This is SNAP25 homologous protein SNAP33 from Arabidopsis thaliana (Mouse-ear cress).